A 96-amino-acid polypeptide reads, in one-letter code: MNTIVKHTVGFIASIVLTILAVFVTLYTSMALNAKITIIFGFAFIQAAVQLLMFMHLTESKDGNLQTFKVLFAIIITLITVIGTYWVMQGGHSSHL.

3 consecutive transmembrane segments (helical) span residues 8–28, 36–56, and 68–88; these read TVGF…TLYT, ITII…MFMH, and FKVL…YWVM.

The protein belongs to the cytochrome c oxidase bacterial subunit 4 family.

It localises to the cell membrane. It carries out the reaction 2 a quinol + O2 = 2 a quinone + 2 H2O. Catalyzes quinol oxidation with the concomitant reduction of oxygen to water. The protein is Probable quinol oxidase subunit 4 (qoxD) of Staphylococcus saprophyticus subsp. saprophyticus (strain ATCC 15305 / DSM 20229 / NCIMB 8711 / NCTC 7292 / S-41).